The following is a 448-amino-acid chain: Serine/threonine-protein phosphatase 2A regulatory subunit B'' subunit gamma (448 aa).

2 EF-hand domains span residues 268 to 303 and 336 to 371; these read PSAL…TLTC and KEPA…IQEQ. Residues Asp-281, Asp-283, Asn-285, Met-287, and Glu-292 each contribute to the Ca(2+) site.

It is found in the nucleus. The protein localises to the cytoplasm. Its function is as follows. Possible role in the regulation of cell death. In Xenopus tropicalis (Western clawed frog), this protein is Serine/threonine-protein phosphatase 2A regulatory subunit B'' subunit gamma (ppp2r3c).